We begin with the raw amino-acid sequence, 245 residues long: tRNA (guanine-N(1)-)-methyltransferase (245 aa).

S-adenosyl-L-methionine contacts are provided by residues G111 and 131–136 (MGDYVL).

This sequence belongs to the RNA methyltransferase TrmD family. In terms of assembly, homodimer.

The protein localises to the cytoplasm. The catalysed reaction is guanosine(37) in tRNA + S-adenosyl-L-methionine = N(1)-methylguanosine(37) in tRNA + S-adenosyl-L-homocysteine + H(+). In terms of biological role, specifically methylates guanosine-37 in various tRNAs. The sequence is that of tRNA (guanine-N(1)-)-methyltransferase from Staphylococcus epidermidis (strain ATCC 12228 / FDA PCI 1200).